The following is a 114-amino-acid chain: Neurotrophic factor BDNF precursor form (114 aa).

Cystine bridges form between Cys14–Cys81, Cys59–Cys110, and Cys69–Cys112.

Belongs to the NGF-beta family.

Its subcellular location is the secreted. Promotes the survival of neuronal populations that are all located either in the central nervous system or directly connected to it. This is Neurotrophic factor BDNF precursor form (bdnf) from Xenopus laevis (African clawed frog).